The primary structure comprises 309 residues: 2-dehydro-3-deoxygluconokinase (309 aa).

Substrate-binding positions include 34 to 38 (GAEVN), tyrosine 89, 103 to 105 (YYR), and arginine 167. ATP-binding positions include 165-167 (NYR), serine 193, 219-225 (KRGAKGA), 248-251 (GAGD), and asparagine 275. Aspartate 251 is a binding site for substrate. Aspartate 251 functions as the Proton acceptor in the catalytic mechanism. Residue aspartate 287 participates in substrate binding.

Belongs to the carbohydrate kinase pfkB family. As to quaternary structure, homohexamer; trimer of dimers.

The catalysed reaction is 2-dehydro-3-deoxy-D-gluconate + ATP = 2-dehydro-3-deoxy-6-phospho-D-gluconate + ADP + H(+). The protein operates within carbohydrate acid metabolism; 2-dehydro-3-deoxy-D-gluconate degradation; D-glyceraldehyde 3-phosphate and pyruvate from 2-dehydro-3-deoxy-D-gluconate: step 1/2. In terms of biological role, involved in the degradation of glucose via the semi-phosphorylative Entner-Doudoroff pathway. Catalyzes the phosphorylation of 2-keto-3-deoxygluconate (KDG) to produce 2-keto-3-deoxy-6-phosphogluconate (KDPG). The polypeptide is 2-dehydro-3-deoxygluconokinase (kdgK) (Thermus thermophilus (strain ATCC 27634 / DSM 579 / HB8)).